Reading from the N-terminus, the 468-residue chain is MSDQNDKKVEIIVFPYHGQGHMNTMLQFAKRIAWKNAKVTIATTLSTTNKMKSKVENAWGTSITLDSIYDDSDESQIKFMDRMARFEAAAASSLSKLLVQKKEEADNKVLLVYDGNLPWALDIAHEHGVRGAAFFPQSCATVATYYSLYQETQGKELETELPAVFPPLELIQRNVPNVFGLKFPEAVVAKNGKEYSPFVLFVLRQCINLEKADLLLFNQFDKLVEPGEVLQWMSKIFNVKTIGPTLPSSYIDKRIKDDVDYGFHAFNLDNNSCINWLNSKPARSVIYIAFGSSVHYSVEQMTEIAEALKSQPNNFLWAVRETEQKKLPEDFVQQTSEKGLMLSWCPQLDVLVHESISCFVTHCGWNSITEALSFGVPMLSVPQFLDQPVDAHFVEQVWGAGITVKRSEDGLVTRDEIVRCLEVLNNGEKAEEIKANVARWKVLAKEALDEGGSSDKHIDEIIEWVSSF.

Gly20 is a UDP-alpha-D-glucose binding site. His21 serves as the catalytic Proton acceptor. Catalysis depends on Asp114, which acts as the Charge relay. UDP-alpha-D-glucose contacts are provided by Ser292, Trp344, Gln347, His362, Trp365, Asn366, Ser367, Glu370, Asp386, and Gln387.

Belongs to the UDP-glycosyltransferase family. In terms of tissue distribution, mainly expressed in flowers, flower buds and young leaves, and, to a lesser extent, in old leaves, stems and roots.

It participates in secondary metabolite biosynthesis; terpenoid biosynthesis. Functionally, component of the oleanane-type triterpene saponins (e.g. saponarioside A and saponarioside B) biosynthetic pathway, leading to the production of natural products with detergent properties used as traditional sources of soap. A glycosyltransferase that, together with SDR1, mediates the conversion of QA-tri to QA-triF; UGT74CD1 may transfer 4-keto-6-deoxy-glucose to QA-tri, which is in turn reduced to D-fucose by SDR1, thus leading to QA-triF formation via the initiation of the C-28 sugar chain. This chain is UDP-glucosyl transferase 74CD1, found in Saponaria officinalis (Common soapwort).